The primary structure comprises 340 residues: HTH-type transcriptional repressor PurR (340 aa).

Positions 2-56 constitute an HTH lacI-type domain; it reads ATIKDVAKLVGVSTTTVSHVINKTRFVAEDTTKAVWEAIASLNYSPSAVARSLKV. Positions 4 to 23 form a DNA-binding region, H-T-H motif; sequence IKDVAKLVGVSTTTVSHVIN. A DNA-binding region spans residues 48–56; the sequence is SAVARSLKV. Residues Tyr73, Lys188, Thr190, Phe219, and Asp273 each contribute to the hypoxanthine site.

Homodimer.

It functions in the pathway purine metabolism; purine nucleotide biosynthesis [regulation]. Functionally, is the main repressor of the genes involved in the de novo synthesis of purine nucleotides, regulating purB, purC, purEK, purF, purHD, purL, purMN and guaBA expression. PurR is allosterically activated to bind its cognate DNA by binding the purine corepressors, hypoxanthine or guanine, thereby effecting transcription repression. In Glaesserella parasuis serovar 5 (strain SH0165) (Haemophilus parasuis), this protein is HTH-type transcriptional repressor PurR.